The primary structure comprises 79 residues: Potassium channel toxin Hge-beta-KTx (79 aa).

The signal sequence occupies residues 1–21 (MAKSFFAAFLIIMLISSLVDG). In terms of domain architecture, BetaSPN-type CS-alpha/beta spans 48 to 79 (EYMCPVVSSFCKQHCARLGKSGQCDLLECICS). Disulfide bonds link C51–C71, C58–C76, and C62–C78.

Expressed by the venom gland.

The protein resides in the secreted. Its function is as follows. The full peptide presents antibacterial and cytotoxic activities. The synthetic C-terminus (AA 33-76) inhibits voltage-gated potassium channels Kv1.1/KCNA1, Kv1.2/KCNA2, and Kv1.3/KCNA3. This is Potassium channel toxin Hge-beta-KTx from Hoffmannihadrurus gertschi (Scorpion).